Reading from the N-terminus, the 174-residue chain is Interleukin-10 (174 aa).

A signal peptide spans 1 to 16 (MPTWMLLFCLLCVTSS). Asn-17 carries N-linked (GlcNAc...) asparagine glycosylation. Intrachain disulfides connect Cys-26/Cys-122 and Cys-76/Cys-128.

The protein belongs to the IL-10 family. In terms of assembly, homodimer. Interacts with IL10RA and IL10RB.

It localises to the secreted. Its function is as follows. Major immune regulatory cytokine that acts on many cells of the immune system where it has profound anti-inflammatory functions, limiting excessive tissue disruption caused by inflammation. Mechanistically, IL10 binds to its heterotetrameric receptor comprising IL10RA and IL10RB leading to JAK1 and STAT2-mediated phosphorylation of STAT3. In turn, STAT3 translocates to the nucleus where it drives expression of anti-inflammatory mediators. Targets antigen-presenting cells (APCs) such as macrophages and monocytes and inhibits their release of pro-inflammatory cytokines including granulocyte-macrophage colony-stimulating factor /GM-CSF, granulocyte colony-stimulating factor/G-CSF, IL-1 alpha, IL-1 beta, IL-6, IL-8 and TNF-alpha. Also interferes with antigen presentation by reducing the expression of MHC-class II and co-stimulatory molecules, thereby inhibiting their ability to induce T cell activation. In addition, controls the inflammatory response of macrophages by reprogramming essential metabolic pathways including mTOR signaling. In Trichosurus vulpecula (Brush-tailed possum), this protein is Interleukin-10 (IL10).